We begin with the raw amino-acid sequence, 294 residues long: Elongation factor Ts (294 aa).

Residues 80–83 (TDFV) form an involved in Mg(2+) ion dislocation from EF-Tu region.

The protein belongs to the EF-Ts family.

It is found in the cytoplasm. Associates with the EF-Tu.GDP complex and induces the exchange of GDP to GTP. It remains bound to the aminoacyl-tRNA.EF-Tu.GTP complex up to the GTP hydrolysis stage on the ribosome. In Listeria monocytogenes serovar 1/2a (strain ATCC BAA-679 / EGD-e), this protein is Elongation factor Ts.